We begin with the raw amino-acid sequence, 141 residues long: Fluoride-specific ion channel FluC 1 (141 aa).

A run of 4 helical transmembrane segments spans residues 12–32 (LYAL…LVGV), 44–64 (WATL…AAIA), 79–99 (FVMT…LETF), and 107–127 (ALAA…AVWL). Gly86 and Thr89 together coordinate Na(+).

The protein belongs to the fluoride channel Fluc/FEX (TC 1.A.43) family.

Its subcellular location is the cell inner membrane. The catalysed reaction is fluoride(in) = fluoride(out). Its activity is regulated as follows. Na(+) is not transported, but it plays an essential structural role and its presence is essential for fluoride channel function. Its function is as follows. Fluoride-specific ion channel. Important for reducing fluoride concentration in the cell, thus reducing its toxicity. In Rhodopseudomonas palustris (strain BisB18), this protein is Fluoride-specific ion channel FluC 1.